Consider the following 1350-residue polypeptide: 1-phosphatidylinositol 4,5-bisphosphate phosphodiesterase gamma plc-3 (1350 aa).

Residues 1–40 (MQHGSLGPSSSSRKTTVTSTAGSVHLHHRSSNGFSTASRA) form a disordered region. The segment covering 9–20 (SSSSRKTTVTST) has biased composition (low complexity). Polar residues predominate over residues 31 to 40 (SNGFSTASRA). Residues 352-503 (HDMSRPLSHY…LKKKIIVKHK (152 aa)) enclose the PI-PLC X-box domain. Residues His-367 and His-419 contribute to the active site. Positions 570–594 (NPNDDTVSVSGDEEREEETPSGFGV) are disordered. SH2 domains follow at residues 605 to 704 (WFHG…TIPC) and 715 to 804 (WFSA…RFPV). The SH3 domain maps to 832-890 (DKEVQARALRPYRGTADDELSFPANVIITVLRKEEGLWRGRYGSLTGWFPSAHVQEILP). The PH domain occupies 855–960 (ANVIITVLRK…WQNNLFELTR (106 aa)). The PI-PLC Y-box domain maps to 982–1092 (LSNLVVYCQA…CGYLLKPDYM (111 aa)). One can recognise a C2 domain in the interval 1099–1220 (PTNTEKFATA…CGFRSVPLKN (122 aa)). The segment at 1270–1350 (GDSIPREMAP…KFSFGKSSKS (81 aa)) is disordered. Positions 1283-1329 (TSATDRSLDSPTNSESRATLLSGQRGSQDSMDSAAETSSIASGTISS) are enriched in polar residues. Residues 1340 to 1350 (KKFSFGKSSKS) are compositionally biased toward low complexity.

Ca(2+) is required as a cofactor. As to expression, expressed in intestine, isthmus of the pharynx, proximal gonad sheath cells, spermatheca and uterine sheath cells. In males, expressed in the valve cell, the vas deferens and retractor and ventral protactor muscles.

The enzyme catalyses a 1,2-diacyl-sn-glycero-3-phospho-(1D-myo-inositol-4,5-bisphosphate) + H2O = 1D-myo-inositol 1,4,5-trisphosphate + a 1,2-diacyl-sn-glycerol + H(+). Mediates the production of the second messenger molecules diacylglycerol (DAG) and inositol 1,4,5-trisphosphate (IP3) which plays an important role in the regulation of intracellular signaling cascades. Regulates basal and ovulatory sheath cell contractions by controlling Ca(2+) oscillations via IP3-mediated activation of IP3 receptor itr-1. In intestinal epithelial cells, regulates Ca(2+) oscillations which control posterior body wall muscle contractions required for defecation by IP3-mediated activation of itr-1 and probably by activating TRPM channels gon-2 and gtl-1 by reducing PIP2 levels. By activating tpa-1 via DAG production, required for the expression of antimicrobial peptide nlp-29 in the epidermis in response to fungal infection or physical injury. By triggering Ca(2+) transient via IP3-mediated activation of IPR3 receptor itr-1 in ASH sensory neurons, involved in avoidance behavior in response to nose touch. Probably by regulating neuronal transmission in ALA neurons, mediates the decrease in pharyngeal pumping and locomotion during the quiescent state that precedes each larval molt, downstream of lin-3 and receptor let-23 and upstream of tpa-1 but not itr-1. During embryogenesis, may play an role in epidermal morphogenesis together with plc-1. Probably downstream of receptor daf-2, regulates male-sex muscle excitability in the absence of food. In Caenorhabditis elegans, this protein is 1-phosphatidylinositol 4,5-bisphosphate phosphodiesterase gamma plc-3.